Consider the following 179-residue polypeptide: Large ribosomal subunit protein uL6 (179 aa).

This sequence belongs to the universal ribosomal protein uL6 family. As to quaternary structure, part of the 50S ribosomal subunit.

Functionally, this protein binds to the 23S rRNA, and is important in its secondary structure. It is located near the subunit interface in the base of the L7/L12 stalk, and near the tRNA binding site of the peptidyltransferase center. This is Large ribosomal subunit protein uL6 from Mycobacterium leprae (strain Br4923).